Consider the following 427-residue polypeptide: Trigger factor (427 aa).

In terms of domain architecture, PPIase FKBP-type spans 163–248 (GDTVVIDFVG…IHEVKAKEVP (86 aa)).

This sequence belongs to the FKBP-type PPIase family. Tig subfamily.

Its subcellular location is the cytoplasm. The catalysed reaction is [protein]-peptidylproline (omega=180) = [protein]-peptidylproline (omega=0). In terms of biological role, involved in protein export. Acts as a chaperone by maintaining the newly synthesized protein in an open conformation. Functions as a peptidyl-prolyl cis-trans isomerase. In Streptococcus pneumoniae (strain CGSP14), this protein is Trigger factor.